Consider the following 251-residue polypeptide: Haloacid dehalogenase-like hydrolase domain-containing protein 3 (251 aa).

Lys15 carries the N6-acetyllysine; alternate modification. Lys15 bears the N6-succinyllysine; alternate mark.

This sequence belongs to the HAD-like hydrolase superfamily.

The chain is Haloacid dehalogenase-like hydrolase domain-containing protein 3 (HDHD3) from Homo sapiens (Human).